The primary structure comprises 486 residues: ATP synthase subunit beta (486 aa).

164 to 171 is a binding site for ATP; the sequence is GGAGVGKT.

It belongs to the ATPase alpha/beta chains family. F-type ATPases have 2 components, CF(1) - the catalytic core - and CF(0) - the membrane proton channel. CF(1) has five subunits: alpha(3), beta(3), gamma(1), delta(1), epsilon(1). CF(0) has four main subunits: a(1), b(1), b'(1) and c(9-12).

The protein resides in the cellular thylakoid membrane. The enzyme catalyses ATP + H2O + 4 H(+)(in) = ADP + phosphate + 5 H(+)(out). In terms of biological role, produces ATP from ADP in the presence of a proton gradient across the membrane. The catalytic sites are hosted primarily by the beta subunits. This Prochlorococcus marinus (strain MIT 9215) protein is ATP synthase subunit beta.